The sequence spans 366 residues: Ribosomal RNA large subunit methyltransferase M (366 aa).

S-adenosyl-L-methionine contacts are provided by residues Ser188, 221–224 (CPGG), Asp240, Asp260, and Asp277. Catalysis depends on Lys306, which acts as the Proton acceptor.

This sequence belongs to the class I-like SAM-binding methyltransferase superfamily. RNA methyltransferase RlmE family. RlmM subfamily. As to quaternary structure, monomer.

Its subcellular location is the cytoplasm. The catalysed reaction is cytidine(2498) in 23S rRNA + S-adenosyl-L-methionine = 2'-O-methylcytidine(2498) in 23S rRNA + S-adenosyl-L-homocysteine + H(+). Its function is as follows. Catalyzes the 2'-O-methylation at nucleotide C2498 in 23S rRNA. The protein is Ribosomal RNA large subunit methyltransferase M of Photorhabdus laumondii subsp. laumondii (strain DSM 15139 / CIP 105565 / TT01) (Photorhabdus luminescens subsp. laumondii).